A 497-amino-acid polypeptide reads, in one-letter code: Glutamyl-tRNA(Gln) amidotransferase subunit A (497 aa).

Catalysis depends on charge relay system residues K80 and S155. The Acyl-ester intermediate role is filled by S179.

It belongs to the amidase family. GatA subfamily. As to quaternary structure, heterotrimer of A, B and C subunits.

It catalyses the reaction L-glutamyl-tRNA(Gln) + L-glutamine + ATP + H2O = L-glutaminyl-tRNA(Gln) + L-glutamate + ADP + phosphate + H(+). Functionally, allows the formation of correctly charged Gln-tRNA(Gln) through the transamidation of misacylated Glu-tRNA(Gln) in organisms which lack glutaminyl-tRNA synthetase. The reaction takes place in the presence of glutamine and ATP through an activated gamma-phospho-Glu-tRNA(Gln). This Streptomyces coelicolor (strain ATCC BAA-471 / A3(2) / M145) protein is Glutamyl-tRNA(Gln) amidotransferase subunit A (gatA).